The sequence spans 487 residues: NADH-quinone oxidoreductase subunit N (487 aa).

Helical transmembrane passes span L7–T27, L37–L57, F81–F101, P112–I132, F166–F186, A207–F227, G237–L257, I276–T296, I307–A327, L329–L349, L373–F393, D407–I427, and V452–L472.

Belongs to the complex I subunit 2 family. NDH-1 is composed of 14 different subunits. Subunits NuoA, H, J, K, L, M, N constitute the membrane sector of the complex.

It is found in the cell inner membrane. The enzyme catalyses a quinone + NADH + 5 H(+)(in) = a quinol + NAD(+) + 4 H(+)(out). In terms of biological role, NDH-1 shuttles electrons from NADH, via FMN and iron-sulfur (Fe-S) centers, to quinones in the respiratory chain. The immediate electron acceptor for the enzyme in this species is believed to be ubiquinone. Couples the redox reaction to proton translocation (for every two electrons transferred, four hydrogen ions are translocated across the cytoplasmic membrane), and thus conserves the redox energy in a proton gradient. The chain is NADH-quinone oxidoreductase subunit N from Erythrobacter litoralis (strain HTCC2594).